A 176-amino-acid polypeptide reads, in one-letter code: PRL-1 phosphatase (176 aa).

Residues 13 to 166 (APALIEYKGM…YKPKARLKHK (154 aa)) form the Tyrosine-protein phosphatase domain. Cysteine 109 serves as the catalytic Phosphocysteine intermediate. Cysteine 173 carries the cysteine methyl ester modification. Residue cysteine 173 is the site of S-farnesyl cysteine attachment. Residues 174–176 (SVQ) constitute a propeptide, removed in mature form.

This sequence belongs to the protein-tyrosine phosphatase family. In terms of assembly, homotrimer. Interacts with uex, possibly at the plasma membrane. In terms of tissue distribution, expressed in the adult head (at protein level). Expressed in neurons in the antennal lobe and V-glomeruli (at protein level). Expressed in dorsocentral neurons (at protein level).

It is found in the cytoplasm. It localises to the cell membrane. Its subcellular location is the apicolateral cell membrane. The protein localises to the cell projection. The protein resides in the axon. It catalyses the reaction O-phospho-L-tyrosyl-[protein] + H2O = L-tyrosyl-[protein] + phosphate. Probable phosphatase. Inhibits growth possibly by negatively regulating Src64B-induced growth. Regulates central nervous system circuit formation and stabilization of synapse-dense terminal arbors. In dorsocentral neurons, regulates synaptogenesis in terminal arbors via modulation of the insulin receptor pathway, likely upstream of Akt1, and via reduction of PtdIns(4,5)P2 (Phosphatidylinositol 4,5-bisphosphate) levels. In the nervous system, plays a protective role together with uex in response to olfactory carbon dioxide stimulation. This Drosophila melanogaster (Fruit fly) protein is PRL-1 phosphatase.